A 641-amino-acid polypeptide reads, in one-letter code: ATP-dependent zinc metalloprotease FtsH 2 (641 aa).

The Periplasmic segment spans residues 1–100; it reads MLAYYVSVNQ…IDVKVIHNFW (100 aa). Residues 101-121 form a helical membrane-spanning segment; sequence GQAFLSVLPFLLFILALYFLF. At 122–641 the chain is on the cytoplasmic side; that stretch reads RQQIRMAGRG…LLPGLEGAPA (520 aa). 193–200 is a binding site for ATP; sequence GPPGTGKT. H415 contributes to the Zn(2+) binding site. Residue E416 is part of the active site. Zn(2+) contacts are provided by H419 and D491. Positions 593–641 are disordered; sequence KTGKMTNPPSKNSSPVSNGGEASSTKSPARQEETTKDGGLLPGLEGAPA. 2 stretches are compositionally biased toward low complexity: residues 599–610 and 630–641; these read NPPSKNSSPVSN and GGLLPGLEGAPA.

It in the central section; belongs to the AAA ATPase family. The protein in the C-terminal section; belongs to the peptidase M41 family. In terms of assembly, homohexamer. The cofactor is Zn(2+).

The protein localises to the cell inner membrane. Functionally, acts as a processive, ATP-dependent zinc metallopeptidase for both cytoplasmic and membrane proteins. Plays a role in the quality control of integral membrane proteins. This Methylacidiphilum infernorum (isolate V4) (Methylokorus infernorum (strain V4)) protein is ATP-dependent zinc metalloprotease FtsH 2.